The following is a 117-amino-acid chain: Glycine cleavage system H-like protein (117 aa).

Positions 21–103 (IVKLGLSSQM…ESEGWFVVLQ (83 aa)) constitute a Lipoyl-binding domain. Lys-62 bears the N6-lipoyllysine mark.

It belongs to the GcvH family. (R)-lipoate serves as cofactor.

This is Glycine cleavage system H-like protein from Chlamydia trachomatis serovar D (strain ATCC VR-885 / DSM 19411 / UW-3/Cx).